The chain runs to 105 residues: Small ribosomal subunit protein uS10 (105 aa).

This sequence belongs to the universal ribosomal protein uS10 family. As to quaternary structure, part of the 30S ribosomal subunit.

Its function is as follows. Involved in the binding of tRNA to the ribosomes. The protein is Small ribosomal subunit protein uS10 of Rickettsia conorii (strain ATCC VR-613 / Malish 7).